Reading from the N-terminus, the 431-residue chain is Adenylosuccinate lyase (431 aa).

N(6)-(1,2-dicarboxyethyl)-AMP-binding positions include 4–5, 67–69, and 93–94; these read RY, RHD, and TS. His-141 acts as the Proton donor/acceptor in catalysis. Gln-212 contributes to the N(6)-(1,2-dicarboxyethyl)-AMP binding site. Ser-262 serves as the catalytic Proton donor/acceptor. N(6)-(1,2-dicarboxyethyl)-AMP is bound by residues Ser-263, 268–270, and 307–311; these read KRN and SVERV.

This sequence belongs to the lyase 1 family. Adenylosuccinate lyase subfamily. Homooligomer. Residues from neighboring subunits contribute catalytic and substrate-binding residues to each active site.

The enzyme catalyses N(6)-(1,2-dicarboxyethyl)-AMP = fumarate + AMP. The catalysed reaction is (2S)-2-[5-amino-1-(5-phospho-beta-D-ribosyl)imidazole-4-carboxamido]succinate = 5-amino-1-(5-phospho-beta-D-ribosyl)imidazole-4-carboxamide + fumarate. The protein operates within purine metabolism; AMP biosynthesis via de novo pathway; AMP from IMP: step 2/2. It functions in the pathway purine metabolism; IMP biosynthesis via de novo pathway; 5-amino-1-(5-phospho-D-ribosyl)imidazole-4-carboxamide from 5-amino-1-(5-phospho-D-ribosyl)imidazole-4-carboxylate: step 2/2. Catalyzes two reactions in de novo purine nucleotide biosynthesis. Catalyzes the breakdown of 5-aminoimidazole- (N-succinylocarboxamide) ribotide (SAICAR or 2-[5-amino-1-(5-phospho-beta-D-ribosyl)imidazole-4-carboxamido]succinate) to 5-aminoimidazole-4-carboxamide ribotide (AICAR or 5-amino-1-(5-phospho-beta-D-ribosyl)imidazole-4-carboxamide) and fumarate, and of adenylosuccinate (ADS or N(6)-(1,2-dicarboxyethyl)-AMP) to adenosine monophosphate (AMP) and fumarate. This chain is Adenylosuccinate lyase (purB), found in Synechocystis sp. (strain ATCC 27184 / PCC 6803 / Kazusa).